The primary structure comprises 382 residues: 3-dehydroquinate synthase (382 aa).

Residues 81–86, 115–119, 139–140, Lys-152, and Lys-161 contribute to the NAD(+) site; these read EGEISK, GVVGD, and TS. Zn(2+) contacts are provided by Glu-194, His-256, and His-274.

Belongs to the sugar phosphate cyclases superfamily. Dehydroquinate synthase family. The cofactor is NAD(+). Co(2+) is required as a cofactor. Zn(2+) serves as cofactor.

The protein resides in the cytoplasm. The enzyme catalyses 7-phospho-2-dehydro-3-deoxy-D-arabino-heptonate = 3-dehydroquinate + phosphate. It participates in metabolic intermediate biosynthesis; chorismate biosynthesis; chorismate from D-erythrose 4-phosphate and phosphoenolpyruvate: step 2/7. In terms of biological role, catalyzes the conversion of 3-deoxy-D-arabino-heptulosonate 7-phosphate (DAHP) to dehydroquinate (DHQ). This Bradyrhizobium diazoefficiens (strain JCM 10833 / BCRC 13528 / IAM 13628 / NBRC 14792 / USDA 110) protein is 3-dehydroquinate synthase.